A 55-amino-acid polypeptide reads, in one-letter code: Large ribosomal subunit protein bL33B (55 aa).

The protein belongs to the bacterial ribosomal protein bL33 family.

The sequence is that of Large ribosomal subunit protein bL33B from Salinispora arenicola (strain CNS-205).